The primary structure comprises 589 residues: RNA-directed RNA polymerase subunit beta (589 aa).

In terms of domain architecture, RdRp catalytic spans 259–391; that stretch reads RRAHEGSVTN…TNTKKTFSEG (133 aa). Residues Asp-274, Asp-359, and Asp-360 each contribute to the Mg(2+) site.

In terms of assembly, homodimer; the replicase complex can dimerize. Part of the viral RNA-dependent RNA polymerase complex, the other subunits are the host ribosomal protein S1, EF-Tu and EF-Ts. S1 is needed for the initiation of genomic RNA (+)-strand replication. Mg(2+) serves as cofactor.

The enzyme catalyses RNA(n) + a ribonucleoside 5'-triphosphate = RNA(n+1) + diphosphate. This is the catalytic subunit of the viral RNA-dependent RNA polymerase complex. This complex is involved in viral RNA replication that produces (+)-stranded genomes via a complementary, (-)-stranded intermediate. Binds RNA cooperatively with the host ribosomal protein S1. This Escherichia coli (Bacteriophage Q-beta) protein is RNA-directed RNA polymerase subunit beta.